Here is a 379-residue protein sequence, read N- to C-terminus: Chaperone protein DnaJ (379 aa).

The 66-residue stretch at 5–70 folds into the J domain; the sequence is DYYEVLGLSK…EKKAMYDQYG (66 aa). The CR-type zinc-finger motif lies at 136–214; sequence GCKKDIRIHT…CHGDGRVHKA (79 aa). Cys149, Cys152, Cys166, Cys169, Cys188, Cys191, Cys202, and Cys205 together coordinate Zn(2+). CXXCXGXG motif repeat units lie at residues 149 to 156, 166 to 173, 188 to 195, and 202 to 209; these read CDTCHGTG, CSHCHGSG, CPSCHGTG, and CRSCHGDG.

Belongs to the DnaJ family. As to quaternary structure, homodimer. Zn(2+) is required as a cofactor.

It is found in the cytoplasm. Functionally, participates actively in the response to hyperosmotic and heat shock by preventing the aggregation of stress-denatured proteins and by disaggregating proteins, also in an autonomous, DnaK-independent fashion. Unfolded proteins bind initially to DnaJ; upon interaction with the DnaJ-bound protein, DnaK hydrolyzes its bound ATP, resulting in the formation of a stable complex. GrpE releases ADP from DnaK; ATP binding to DnaK triggers the release of the substrate protein, thus completing the reaction cycle. Several rounds of ATP-dependent interactions between DnaJ, DnaK and GrpE are required for fully efficient folding. Also involved, together with DnaK and GrpE, in the DNA replication of plasmids through activation of initiation proteins. The sequence is that of Chaperone protein DnaJ from Mannheimia haemolytica (Pasteurella haemolytica).